The primary structure comprises 720 residues: Secreted RxLR effector protein 138 (720 aa).

Positions 1 to 20 (MRSAFYVAIVLLVAAGSQTA) are cleaved as a signal peptide. The RxLR-dEER signature appears at 56-71 (RNLKDDFMFSAGDEER). The interval 264 to 335 (ESNTRKRNNV…VAPPEPSRLD (72 aa)) is disordered. Basic and acidic residues predominate over residues 320–335 (KQHDHRVAPPEPSRLD). Asn-609 carries an N-linked (GlcNAc...) asparagine glycan.

Belongs to the RxLR effector family.

The protein localises to the secreted. Its subcellular location is the host nucleus. In terms of biological role, secreted effector that acts as an elicitor that induces cell death in host plant cells. This is Secreted RxLR effector protein 138 from Plasmopara viticola (Downy mildew of grapevine).